The chain runs to 595 residues: 3-hydroxy-3-methylglutaryl-coenzyme A reductase 2 (595 aa).

Asn35 carries N-linked (GlcNAc...) asparagine glycosylation. Helical transmembrane passes span 48–68 (LPLYLTNGLFFTMFFSVMYFL) and 92–112 (AIVSLIASVIYLLGFFGIGFV). The tract at residues 113–183 (QTFVSRGNND…SPLITPASSE (71 aa)) is linker. Residue Asn121 is glycosylated (N-linked (GlcNAc...) asparagine). The segment at 184-595 (EDEEIINSVV…KYNRSTKASS (412 aa)) is catalytic. Glu278 acts as the Charge relay system in catalysis. N-linked (GlcNAc...) asparagine glycosylation is present at Asn342. Lys410 functions as the Charge relay system in the catalytic mechanism. N-linked (GlcNAc...) asparagine glycosylation is present at Asn455. Catalysis depends on Asp486, which acts as the Charge relay system. The Proton donor role is filled by His584. N-linked (GlcNAc...) asparagine glycosylation occurs at Asn588.

Belongs to the HMG-CoA reductase family. In terms of tissue distribution, expressed in young flowers and in mature sepals and ovaries.

Its subcellular location is the endoplasmic reticulum membrane. The catalysed reaction is (R)-mevalonate + 2 NADP(+) + CoA = (3S)-3-hydroxy-3-methylglutaryl-CoA + 2 NADPH + 2 H(+). It participates in metabolic intermediate biosynthesis; (R)-mevalonate biosynthesis; (R)-mevalonate from acetyl-CoA: step 3/3. Functionally, catalyzes the synthesis of mevalonate. The specific precursor of all isoprenoid compounds present in plants. The polypeptide is 3-hydroxy-3-methylglutaryl-coenzyme A reductase 2 (HMG2) (Solanum tuberosum (Potato)).